We begin with the raw amino-acid sequence, 2253 residues long: Polycystin family receptor for egg jelly (2253 aa).

A signal peptide spans 1-19 (MRPGPALLLLGVGLSLSVG). The Extracellular segment spans residues 20 to 1184 (RLPLPPVPRG…NIIKSLHQNP (1165 aa)). Residues 154-169 (RPASPAARVSPRSAAP) are compositionally biased toward low complexity. A disordered region spans residues 154 to 177 (RPASPAARVSPRSAAPGPRPQQGF). Asparagine 197, asparagine 242, asparagine 295, asparagine 306, asparagine 345, asparagine 349, asparagine 481, asparagine 674, asparagine 849, asparagine 890, asparagine 923, asparagine 939, asparagine 958, and asparagine 965 each carry an N-linked (GlcNAc...) asparagine glycan. The REJ domain occupies 215-913 (CVIQRVRINT…STMFCDFTND (699 aa)). Residues 1185 to 1205 (VTLFTVLFIILLYVGLAFWAL) traverse the membrane as a helical segment. Topologically, residues 1206–1389 (YRDEMDQHLR…VAKTFNRLQR (184 aa)) are cytoplasmic. The PLAT domain occupies 1230 to 1347 (LCYLVTIFTG…TLDRTFHVTH (118 aa)). Residues 1390–1410 (LSCCLAMLLSSLLCNIMFFNL) traverse the membrane as a helical segment. The Extracellular portion of the chain corresponds to 1411-1427 (NRQEQTESRERKYMRSM). Residues 1428-1448 (MIGIESVLITIPVQLLITFLF) form a helical membrane-spanning segment. The Cytoplasmic segment spans residues 1449-1576 (TCSQRKPQAD…KPRIVLPWWC (128 aa)). Residues 1494–1562 (PREVAKPASK…EQHPSQKDLQ (69 aa)) form a disordered region. Residues 1517–1527 (SKPKHRHRKAQ) are compositionally biased toward basic residues. Positions 1549-1558 (DVHSEQHPSQ) are enriched in basic and acidic residues. Residues 1577–1597 (VYVAWFLVFATSSISSFFIVF) form a helical membrane-spanning segment. At 1598–1607 (YGLTYGYDKS) the chain is on the extracellular side. A helical membrane pass occupies residues 1608-1628 (IEWLFASFCSFCQSVLLVQPS). The Cytoplasmic portion of the chain corresponds to 1629 to 1708 (KIILLSGFRT…RKKRIKRRAL (80 aa)). Residues 1709 to 1729 (LFLSYILTHFIFLALLLILIV) traverse the membrane as a helical segment. Residues 1730-1966 (LLRHTDCFYY…FDRKASAEIY (237 aa)) lie on the Extracellular side of the membrane. N-linked (GlcNAc...) asparagine glycosylation is found at asparagine 1836, asparagine 1893, and asparagine 1944. A helical membrane pass occupies residues 1967-1987 (LYVAILIFFLAYVVDEGCIIM). The Cytoplasmic segment spans residues 1988–1996 (QERASYVRS). A helical membrane pass occupies residues 1997-2017 (VYNLLNFALKCIFTVLIVLFL). The Extracellular portion of the chain corresponds to 2018 to 2042 (RKHFLATGIIRFYLSNPEDFIPFHA). A helical membrane pass occupies residues 2043-2063 (VSQVDHIMRIILGFLLFLTIL). Topologically, residues 2064–2091 (KTLRYSRFFYDVRLAQRAIQAALPGICH) are cytoplasmic. The chain crosses the membrane as a helical span at residues 2092–2112 (MAFVVSVYFFVYMAFGYLVFG). At 2113–2145 (QHEWNYSNLIHSTQTVFSYCVSAFQNTEFSNNR) the chain is on the extracellular side. Residues 2146-2166 (ILGVLFLSSFMLVMICVLINL) traverse the membrane as a helical segment. At 2167–2253 (FQAVILSAYE…NGKKMVYLVV (87 aa)) the chain is on the cytoplasmic side.

It belongs to the polycystin family. Exclusively expressed in testis.

Its subcellular location is the cell membrane. The protein localises to the cytoplasmic vesicle. It localises to the secretory vesicle. It is found in the acrosome membrane. The protein resides in the nucleus. In terms of biological role, testis-specific protein that controls sperm transport and the timing of zona pellucida-evoked exocytosis of the sperm acrosome. This chain is Polycystin family receptor for egg jelly, found in Homo sapiens (Human).